A 355-amino-acid polypeptide reads, in one-letter code: Guanine nucleotide-binding protein G(o) subunit alpha (355 aa).

The span at Met1 to Gln17 shows a compositional bias: low complexity. The interval Met1–Lys24 is disordered. Gly2 carries N-myristoyl glycine lipidation. Residue Cys3 is the site of S-palmitoyl cysteine attachment. In terms of domain architecture, G-alpha spans Lys32–Tyr355. A G1 motif region spans residues Lys35–Thr48. Residues Gly40–Ser47, Leu176–Thr182, Asp201–Gly205, Asp201–Gln206, Asn271–Asp274, and Ala327 contribute to the GTP site. Ser47 and Thr182 together coordinate Mg(2+). A G2 motif region spans residues Asp174–Thr182. The G3 motif stretch occupies residues Phe197–Gln206. Residues Ile267–Asp274 are G4 motif. Positions Thr326–Thr330 are G5 motif.

It belongs to the G-alpha family. G(i/o/t/z) subfamily. G proteins are composed of 3 units; alpha, beta and gamma. The alpha chain contains the guanine nucleotide binding site.

Functionally, guanine nucleotide-binding proteins (G proteins) are involved as modulators or transducers in various transmembrane signaling systems. The G(o) protein function is not clear. This chain is Guanine nucleotide-binding protein G(o) subunit alpha, found in Manduca sexta (Tobacco hawkmoth).